A 321-amino-acid chain; its full sequence is Aldose reductase C (321 aa).

Gly-22 to Gly-31 lines the NADP(+) pocket. The Proton donor role is filled by Tyr-62. A substrate-binding site is contributed by His-124. Ser-227–Asn-281 lines the NADP(+) pocket.

It belongs to the aldo/keto reductase family.

The enzyme catalyses an alditol + NAD(+) = an aldose + NADH + H(+). The catalysed reaction is an alditol + NADP(+) = an aldose + NADPH + H(+). Functionally, catalyzes the NADPH-dependent reduction of a wide variety of carbonyl-containing compounds to their corresponding alcohols with a broad range of catalytic efficiencies. This is Aldose reductase C (alrC) from Dictyostelium discoideum (Social amoeba).